The sequence spans 70 residues: DNA-directed RNA polymerase subunit omega (70 aa).

The protein belongs to the RNA polymerase subunit omega family. In terms of assembly, the RNAP catalytic core consists of 2 alpha, 1 beta, 1 beta' and 1 omega subunit. When a sigma factor is associated with the core the holoenzyme is formed, which can initiate transcription.

The catalysed reaction is RNA(n) + a ribonucleoside 5'-triphosphate = RNA(n+1) + diphosphate. Functionally, promotes RNA polymerase assembly. Latches the N- and C-terminal regions of the beta' subunit thereby facilitating its interaction with the beta and alpha subunits. This is DNA-directed RNA polymerase subunit omega from Staphylococcus saprophyticus subsp. saprophyticus (strain ATCC 15305 / DSM 20229 / NCIMB 8711 / NCTC 7292 / S-41).